We begin with the raw amino-acid sequence, 1163 residues long: Pesticidal crystal protein Cry26Aa (1163 aa).

It belongs to the delta endotoxin family.

Promotes colloidosmotic lysis by binding to the midgut epithelial cells of insects. This chain is Pesticidal crystal protein Cry26Aa (cry26Aa), found in Bacillus thuringiensis subsp. finitimus.